Reading from the N-terminus, the 190-residue chain is uncharacterized protein (190 aa).

A run of 4 helical transmembrane segments spans residues 15-35 (LVMS…VLAI), 58-78 (FSSF…GVLI), 94-114 (FFSA…YFAF), and 148-168 (FLFF…SFFV).

It localises to the membrane. This is an uncharacterized protein from Saccharomyces cerevisiae (strain ATCC 204508 / S288c) (Baker's yeast).